Reading from the N-terminus, the 260-residue chain is 3'-5' ssDNA/RNA exonuclease TatD (260 aa).

Positions 92, 128, and 153 each coordinate a divalent metal cation.

It belongs to the metallo-dependent hydrolases superfamily. TatD-type hydrolase family. TatD subfamily. As to quaternary structure, monomer. Mg(2+) serves as cofactor.

It is found in the cytoplasm. In terms of biological role, 3'-5' exonuclease that prefers single-stranded DNA and RNA. May play a role in the H(2)O(2)-induced DNA damage repair. The sequence is that of 3'-5' ssDNA/RNA exonuclease TatD from Yersinia pseudotuberculosis serotype O:3 (strain YPIII).